We begin with the raw amino-acid sequence, 238 residues long: Ribonuclease HII (238 aa).

The RNase H type-2 domain occupies 12–197 (GIVAGVDEAG…VLELLTDDLL (186 aa)). A divalent metal cation contacts are provided by aspartate 18, glutamate 19, and aspartate 107.

It belongs to the RNase HII family. Mn(2+) is required as a cofactor. The cofactor is Mg(2+).

The protein resides in the cytoplasm. The enzyme catalyses Endonucleolytic cleavage to 5'-phosphomonoester.. Endonuclease that specifically degrades the RNA of RNA-DNA hybrids. The sequence is that of Ribonuclease HII (rnhB) from Thermotoga maritima (strain ATCC 43589 / DSM 3109 / JCM 10099 / NBRC 100826 / MSB8).